The chain runs to 358 residues: Phosphoserine aminotransferase (358 aa).

R41 contacts L-glutamate. Pyridoxal 5'-phosphate is bound by residues A75–S76, W100, T148, D167, and Q190. K191 carries the N6-(pyridoxal phosphate)lysine modification. N233 to T234 is a pyridoxal 5'-phosphate binding site.

This sequence belongs to the class-V pyridoxal-phosphate-dependent aminotransferase family. SerC subfamily. Homodimer. Pyridoxal 5'-phosphate serves as cofactor.

The protein localises to the cytoplasm. It catalyses the reaction O-phospho-L-serine + 2-oxoglutarate = 3-phosphooxypyruvate + L-glutamate. The enzyme catalyses 4-(phosphooxy)-L-threonine + 2-oxoglutarate = (R)-3-hydroxy-2-oxo-4-phosphooxybutanoate + L-glutamate. It functions in the pathway amino-acid biosynthesis; L-serine biosynthesis; L-serine from 3-phospho-D-glycerate: step 2/3. It participates in cofactor biosynthesis; pyridoxine 5'-phosphate biosynthesis; pyridoxine 5'-phosphate from D-erythrose 4-phosphate: step 3/5. In terms of biological role, catalyzes the reversible conversion of 3-phosphohydroxypyruvate to phosphoserine and of 3-hydroxy-2-oxo-4-phosphonooxybutanoate to phosphohydroxythreonine. The protein is Phosphoserine aminotransferase of Campylobacter jejuni (strain RM1221).